The following is a 105-amino-acid chain: Large ribosomal subunit protein bL21 (105 aa).

It belongs to the bacterial ribosomal protein bL21 family. Part of the 50S ribosomal subunit. Contacts protein L20.

In terms of biological role, this protein binds to 23S rRNA in the presence of protein L20. The sequence is that of Large ribosomal subunit protein bL21 from Parafrankia sp. (strain EAN1pec).